Reading from the N-terminus, the 530-residue chain is Histone-arginine methyltransferase CARMER (530 aa).

Residues 141 to 450 (ASQYFQFYGY…QSYDVTIDLH (310 aa)) enclose the SAM-dependent MTase PRMT-type domain. Residues Gln154, Arg163, Gly187, Glu209, Glu238, and Thr266 each coordinate S-adenosyl-L-methionine. At Arg501 the chain carries Asymmetric dimethylarginine; by autocatalysis.

Belongs to the class I-like SAM-binding methyltransferase superfamily. Protein arginine N-methyltransferase family. As to quaternary structure, homodimer. Post-translationally, the dimethylated protein is the major form.

It is found in the cytoplasm. It localises to the nucleus. The catalysed reaction is L-arginyl-[protein] + 2 S-adenosyl-L-methionine = N(omega),N(omega)-dimethyl-L-arginyl-[protein] + 2 S-adenosyl-L-homocysteine + 2 H(+). Functionally, methylates (mono- and asymmetric dimethylation) the guanidino nitrogens of arginyl residues in proteins. May methylate histone H3 at 'Arg-17' and activate transcription via chromatin remodeling. The polypeptide is Histone-arginine methyltransferase CARMER (Art4) (Drosophila sechellia (Fruit fly)).